We begin with the raw amino-acid sequence, 206 residues long: FMN-dependent NADH:quinone oxidoreductase 2 (206 aa).

Ser-10 is a binding site for FMN.

The protein belongs to the azoreductase type 1 family. As to quaternary structure, homodimer. It depends on FMN as a cofactor.

The enzyme catalyses 2 a quinone + NADH + H(+) = 2 a 1,4-benzosemiquinone + NAD(+). The catalysed reaction is N,N-dimethyl-1,4-phenylenediamine + anthranilate + 2 NAD(+) = 2-(4-dimethylaminophenyl)diazenylbenzoate + 2 NADH + 2 H(+). Quinone reductase that provides resistance to thiol-specific stress caused by electrophilic quinones. In terms of biological role, also exhibits azoreductase activity. Catalyzes the reductive cleavage of the azo bond in aromatic azo compounds to the corresponding amines. The sequence is that of FMN-dependent NADH:quinone oxidoreductase 2 from Rhizobium etli (strain ATCC 51251 / DSM 11541 / JCM 21823 / NBRC 15573 / CFN 42).